Consider the following 543-residue polypeptide: Membrane protein insertase YidC (543 aa).

A helical transmembrane segment spans residues 7-27 (FLLIGLAMVSFLLWQQWQVDY). Positions 30–61 (QPAQPVESQQTTGSDAPNSNGDVPIATPTNKS) are disordered. The segment covering 35-61 (VESQQTTGSDAPNSNGDVPIATPTNKS) has biased composition (polar residues). A run of 4 helical transmembrane segments spans residues 341-361 (FAFL…IILI), 421-441 (GGCF…WVLL), 451-471 (FIFW…PILT), and 499-519 (PVAM…YWLI).

This sequence belongs to the OXA1/ALB3/YidC family. Type 1 subfamily. In terms of assembly, interacts with the Sec translocase complex via SecD. Specifically interacts with transmembrane segments of nascent integral membrane proteins during membrane integration.

It is found in the cell inner membrane. Functionally, required for the insertion and/or proper folding and/or complex formation of integral membrane proteins into the membrane. Involved in integration of membrane proteins that insert both dependently and independently of the Sec translocase complex, as well as at least some lipoproteins. Aids folding of multispanning membrane proteins. The protein is Membrane protein insertase YidC of Pseudoalteromonas atlantica (strain T6c / ATCC BAA-1087).